Consider the following 472-residue polypeptide: Chromosomal replication initiator protein DnaA (472 aa).

Residues 1-73 (MSNMEQDRWS…LSCWQAELPE (73 aa)) form a domain I, interacts with DnaA modulators region. The domain II stretch occupies residues 73–128 (EVNRVDLTVRSPVRCAAPAKEAPAPVESRRDEQRPSAERSNGATPVSANHDALGGS). The disordered stretch occupies residues 89-124 (APAKEAPAPVESRRDEQRPSAERSNGATPVSANHDA). A compositionally biased stretch (basic and acidic residues) spans 99–109 (ESRRDEQRPSA). Polar residues predominate over residues 110–119 (ERSNGATPVS). Residues 129 to 351 (PLDPRLTFAS…GAINRLLAHS (223 aa)) form a domain III, AAA+ region region. 4 residues coordinate ATP: Gly-176, Gly-178, Lys-179, and Thr-180. The domain IV, binds dsDNA stretch occupies residues 352 to 472 (KLNNQPVTLE…VESLKRQLQE (121 aa)).

It belongs to the DnaA family. In terms of assembly, oligomerizes as a right-handed, spiral filament on DNA at oriC.

The protein resides in the cytoplasm. Plays an essential role in the initiation and regulation of chromosomal replication. ATP-DnaA binds to the origin of replication (oriC) to initiate formation of the DNA replication initiation complex once per cell cycle. Binds the DnaA box (a 9 base pair repeat at the origin) and separates the double-stranded (ds)DNA. Forms a right-handed helical filament on oriC DNA; dsDNA binds to the exterior of the filament while single-stranded (ss)DNA is stabiized in the filament's interior. The ATP-DnaA-oriC complex binds and stabilizes one strand of the AT-rich DNA unwinding element (DUE), permitting loading of DNA polymerase. After initiation quickly degrades to an ADP-DnaA complex that is not apt for DNA replication. Binds acidic phospholipids. In Rhodopseudomonas palustris (strain TIE-1), this protein is Chromosomal replication initiator protein DnaA.